The sequence spans 231 residues: MTKIGIIGAMDEEVELLKSKLSNCSERTIAECEFYTGTIEGKEIVLLKSGIGKVNAAIGTTLLIQLFQPTAIINTGSAGGLDSSLHVGDLAISTEVRYNDVDATVFGYEFGQVPQMPAFYQPDDMLIDIAIEAAKTVGIPSKKGLILSGDSFMSDAALVEQLKRRFNYPLCSEMEAGAIAQVCHRFGVPFVIIRSLSDIAGAEAKVSYDEFLETASVNSANLVLAIVGRLG.

E13 acts as the Proton acceptor in catalysis. Substrate-binding positions include G79, M153, and 174–175; that span reads ME. The active-site Proton donor is the D198.

This sequence belongs to the PNP/UDP phosphorylase family. MtnN subfamily.

It catalyses the reaction S-adenosyl-L-homocysteine + H2O = S-(5-deoxy-D-ribos-5-yl)-L-homocysteine + adenine. The enzyme catalyses S-methyl-5'-thioadenosine + H2O = 5-(methylsulfanyl)-D-ribose + adenine. It carries out the reaction 5'-deoxyadenosine + H2O = 5-deoxy-D-ribose + adenine. Its pathway is amino-acid biosynthesis; L-methionine biosynthesis via salvage pathway; S-methyl-5-thio-alpha-D-ribose 1-phosphate from S-methyl-5'-thioadenosine (hydrolase route): step 1/2. In terms of biological role, catalyzes the irreversible cleavage of the glycosidic bond in both 5'-methylthioadenosine (MTA) and S-adenosylhomocysteine (SAH/AdoHcy) to adenine and the corresponding thioribose, 5'-methylthioribose and S-ribosylhomocysteine, respectively. Also cleaves 5'-deoxyadenosine, a toxic by-product of radical S-adenosylmethionine (SAM) enzymes, into 5-deoxyribose and adenine. In Halalkalibacterium halodurans (strain ATCC BAA-125 / DSM 18197 / FERM 7344 / JCM 9153 / C-125) (Bacillus halodurans), this protein is 5'-methylthioadenosine/S-adenosylhomocysteine nucleosidase.